A 178-amino-acid chain; its full sequence is Interleukin-10 (178 aa).

A signal peptide spans 1 to 18 (MHSSALLCCLVFLTGVRA). Intrachain disulfides connect Cys-30–Cys-126 and Cys-80–Cys-132. Asn-134 carries an N-linked (GlcNAc...) asparagine glycan.

This sequence belongs to the IL-10 family. In terms of assembly, homodimer. Interacts with IL10RA and IL10RB.

It localises to the secreted. In terms of biological role, major immune regulatory cytokine that acts on many cells of the immune system where it has profound anti-inflammatory functions, limiting excessive tissue disruption caused by inflammation. Mechanistically, IL10 binds to its heterotetrameric receptor comprising IL10RA and IL10RB leading to JAK1 and STAT2-mediated phosphorylation of STAT3. In turn, STAT3 translocates to the nucleus where it drives expression of anti-inflammatory mediators. Targets antigen-presenting cells (APCs) such as macrophages and monocytes and inhibits their release of pro-inflammatory cytokines including granulocyte-macrophage colony-stimulating factor /GM-CSF, granulocyte colony-stimulating factor/G-CSF, IL-1 alpha, IL-1 beta, IL-6, IL-8 and TNF-alpha. Also interferes with antigen presentation by reducing the expression of MHC-class II and co-stimulatory molecules, thereby inhibiting their ability to induce T cell activation. In addition, controls the inflammatory response of macrophages by reprogramming essential metabolic pathways including mTOR signaling. This chain is Interleukin-10 (IL10), found in Callithrix jacchus (White-tufted-ear marmoset).